Consider the following 643-residue polypeptide: Ecto-NOX disulfide-thiol exchanger 1 (643 aa).

Positions 142–221 constitute an RRM domain; the sequence is KTVFVGGLPE…GRLHVDFAQA (80 aa). Coiled-coil stretches lie at residues 307–342 and 425–521; these read VQSA…LTGI and QAYA…QLKG.

This sequence belongs to the ENOX family. It depends on Cu cation as a cofactor.

It is found in the cell membrane. The protein resides in the secreted. The protein localises to the extracellular space. Its activity is regulated as follows. Not inhibited by the antitumor sulfonylurea LY181984, the vabilloid capsaicin, and retinoids. Probably acts as a terminal oxidase of plasma electron transport from cytosolic NAD(P)H via hydroquinones to acceptors at the cell surface. Hydroquinone oxidase activity alternates with a protein disulfide-thiol interchange/oxidoreductase activity which may control physical membrane displacements associated with vesicle budding or cell enlargement. The activities oscillate with a period length of 24 minutes and play a role in control of the ultradian cellular biological clock. This is Ecto-NOX disulfide-thiol exchanger 1 (Enox1) from Mus musculus (Mouse).